We begin with the raw amino-acid sequence, 207 residues long: MVATCLQVVGFVTSFVGWIGIIVTTSTNDWVVTCGYTIPTCRKLDELGSKGLWADCVMATGLYHCKPLVDILILPGYVQACRALMIAASVLGLPAILLLLTVLPCIRMGHEPGVAKYRRAQLAGVMLVLVALCAMVATIWFPVCAHRETTIVSFGYSLYAGWIGAVLCLVGGCVIVCCAGDAQAFGENRFYYSSGSSSPTHAKSAHV.

Met-1 is a topological domain (cytoplasmic). Residues 2–22 (VATCLQVVGFVTSFVGWIGII) form a helical membrane-spanning segment. Topologically, residues 23-82 (VTTSTNDWVVTCGYTIPTCRKLDELGSKGLWADCVMATGLYHCKPLVDILILPGYVQACR) are extracellular. A helical transmembrane segment spans residues 83–103 (ALMIAASVLGLPAILLLLTVL). Residues 104–122 (PCIRMGHEPGVAKYRRAQL) are Cytoplasmic-facing. The helical transmembrane segment at 123–143 (AGVMLVLVALCAMVATIWFPV) threads the bilayer. The Extracellular portion of the chain corresponds to 144-157 (CAHRETTIVSFGYS). The chain crosses the membrane as a helical span at residues 158–178 (LYAGWIGAVLCLVGGCVIVCC). Residues 179 to 207 (AGDAQAFGENRFYYSSGSSSPTHAKSAHV) lie on the Cytoplasmic side of the membrane. Ser-193, Ser-194, Ser-197, and Ser-198 each carry phosphoserine.

This sequence belongs to the claudin family. Interacts with tetraspanin-3/TSPAN3. Interacts with OCLN.

It localises to the cell junction. The protein localises to the tight junction. Its subcellular location is the cell membrane. Its function is as follows. Plays a major role in tight junction-specific obliteration of the intercellular space, through calcium-independent cell-adhesion activity. In Bos taurus (Bovine), this protein is Claudin-11 (CLDN11).